Here is a 537-residue protein sequence, read N- to C-terminus: Chaperonin GroEL 2 (537 aa).

ATP-binding positions include 29 to 32, 86 to 90, G412, and D495; these read TLGP and DGTTT.

Belongs to the chaperonin (HSP60) family. As to quaternary structure, forms a cylinder of 14 subunits composed of two heptameric rings stacked back-to-back. Interacts with the co-chaperonin GroES.

The protein localises to the cytoplasm. It catalyses the reaction ATP + H2O + a folded polypeptide = ADP + phosphate + an unfolded polypeptide.. In terms of biological role, together with its co-chaperonin GroES, plays an essential role in assisting protein folding. The GroEL-GroES system forms a nano-cage that allows encapsulation of the non-native substrate proteins and provides a physical environment optimized to promote and accelerate protein folding. The polypeptide is Chaperonin GroEL 2 (Paenarthrobacter aurescens (strain TC1)).